The chain runs to 183 residues: Peptide deformylase (183 aa).

Fe cation contacts are provided by Cys111 and His154. The active site involves Glu155. Position 158 (His158) interacts with Fe cation.

The protein belongs to the polypeptide deformylase family. It depends on Fe(2+) as a cofactor.

The enzyme catalyses N-terminal N-formyl-L-methionyl-[peptide] + H2O = N-terminal L-methionyl-[peptide] + formate. Functionally, removes the formyl group from the N-terminal Met of newly synthesized proteins. Requires at least a dipeptide for an efficient rate of reaction. N-terminal L-methionine is a prerequisite for activity but the enzyme has broad specificity at other positions. This Staphylococcus aureus (strain COL) protein is Peptide deformylase.